Here is a 426-residue protein sequence, read N- to C-terminus: Histidine--tRNA ligase (426 aa).

The protein belongs to the class-II aminoacyl-tRNA synthetase family. Homodimer.

It is found in the cytoplasm. The catalysed reaction is tRNA(His) + L-histidine + ATP = L-histidyl-tRNA(His) + AMP + diphosphate + H(+). The chain is Histidine--tRNA ligase from Colwellia psychrerythraea (strain 34H / ATCC BAA-681) (Vibrio psychroerythus).